The chain runs to 127 residues: Large ribosomal subunit protein eL22x (127 aa).

It belongs to the eukaryotic ribosomal protein eL22 family.

This chain is Large ribosomal subunit protein eL22x (RPL22A), found in Arabidopsis thaliana (Mouse-ear cress).